Consider the following 411-residue polypeptide: Acetyl-coenzyme A carboxylase carboxyl transferase subunit beta, chloroplastic (411 aa).

The CoA carboxyltransferase N-terminal domain occupies leucine 32 to glutamate 302. Positions 36, 39, 55, and 58 each coordinate Zn(2+). A C4-type zinc finger spans residues cysteine 36–cysteine 58.

It belongs to the AccD/PCCB family. As to quaternary structure, acetyl-CoA carboxylase is a heterohexamer composed of biotin carboxyl carrier protein, biotin carboxylase and 2 subunits each of ACCase subunit alpha and ACCase plastid-coded subunit beta (accD). Zn(2+) is required as a cofactor.

Its subcellular location is the plastid. The protein localises to the chloroplast stroma. The catalysed reaction is N(6)-carboxybiotinyl-L-lysyl-[protein] + acetyl-CoA = N(6)-biotinyl-L-lysyl-[protein] + malonyl-CoA. It functions in the pathway lipid metabolism; malonyl-CoA biosynthesis; malonyl-CoA from acetyl-CoA: step 1/1. Its function is as follows. Component of the acetyl coenzyme A carboxylase (ACC) complex. Biotin carboxylase (BC) catalyzes the carboxylation of biotin on its carrier protein (BCCP) and then the CO(2) group is transferred by the transcarboxylase to acetyl-CoA to form malonyl-CoA. The sequence is that of Acetyl-coenzyme A carboxylase carboxyl transferase subunit beta, chloroplastic from Chlorella vulgaris (Green alga).